We begin with the raw amino-acid sequence, 90 residues long: Small ribosomal subunit protein uS15c (90 aa).

In terms of assembly, component of the chloroplast small ribosomal subunit (SSU). Mature 70S chloroplast ribosomes of higher plants consist of a small (30S) and a large (50S) subunit. The 30S small subunit contains 1 molecule of ribosomal RNA (16S rRNA) and 24 different proteins. The 50S large subunit contains 3 rRNA molecules (23S, 5S and 4.5S rRNA) and 33 different proteins.

It localises to the plastid. It is found in the chloroplast. Component of the chloroplast ribosome (chloro-ribosome), a dedicated translation machinery responsible for the synthesis of chloroplast genome-encoded proteins, including proteins of the transcription and translation machinery and components of the photosynthetic apparatus. The protein is Small ribosomal subunit protein uS15c (rps15) of Spinacia oleracea (Spinach).